The following is a 73-amino-acid chain: UPF0346 protein SSP1318 (73 aa).

This sequence belongs to the UPF0346 family.

The sequence is that of UPF0346 protein SSP1318 from Staphylococcus saprophyticus subsp. saprophyticus (strain ATCC 15305 / DSM 20229 / NCIMB 8711 / NCTC 7292 / S-41).